A 429-amino-acid polypeptide reads, in one-letter code: 3-phosphoshikimate 1-carboxyvinyltransferase (429 aa).

Positions 23, 24, and 28 each coordinate 3-phosphoshikimate. Lys23 lines the phosphoenolpyruvate pocket. Phosphoenolpyruvate-binding residues include Gly95 and Arg123. Residues Ser168, Gln170, Asp316, and Lys343 each coordinate 3-phosphoshikimate. Gln170 contacts phosphoenolpyruvate. Residue Asp316 is the Proton acceptor of the active site. Residues Arg347 and Arg389 each coordinate phosphoenolpyruvate.

It belongs to the EPSP synthase family. As to quaternary structure, monomer.

The protein localises to the cytoplasm. It catalyses the reaction 3-phosphoshikimate + phosphoenolpyruvate = 5-O-(1-carboxyvinyl)-3-phosphoshikimate + phosphate. It participates in metabolic intermediate biosynthesis; chorismate biosynthesis; chorismate from D-erythrose 4-phosphate and phosphoenolpyruvate: step 6/7. Catalyzes the transfer of the enolpyruvyl moiety of phosphoenolpyruvate (PEP) to the 5-hydroxyl of shikimate-3-phosphate (S3P) to produce enolpyruvyl shikimate-3-phosphate and inorganic phosphate. The polypeptide is 3-phosphoshikimate 1-carboxyvinyltransferase (Bacillus cereus (strain ZK / E33L)).